We begin with the raw amino-acid sequence, 745 residues long: uncharacterized protein (745 aa).

Residues 158-256 form the HTH araC/xylS-type domain; it reads NQVCDYIELH…HQTPKQYRGD (99 aa). 2 DNA-binding regions (H-T-H motif) span residues 175–196 and 223–246; these read SELSEYVGWSESHLSKKFTESL and ITDIALQNGFSSAASFARTFKHFT.

This is an uncharacterized protein from Staphylococcus aureus (strain COL).